The sequence spans 349 residues: tRNA pseudouridine synthase D (349 aa).

F27 contacts substrate. Residue D80 is the Nucleophile of the active site. N129 serves as a coordination point for substrate. A TRUD domain is found at 155–303 (GVPNYFGAQR…VEAARRAMLL (149 aa)). F329 is a substrate binding site.

This sequence belongs to the pseudouridine synthase TruD family.

It carries out the reaction uridine(13) in tRNA = pseudouridine(13) in tRNA. Responsible for synthesis of pseudouridine from uracil-13 in transfer RNAs. This is tRNA pseudouridine synthase D from Escherichia coli O6:K15:H31 (strain 536 / UPEC).